Consider the following 453-residue polypeptide: Tubulin beta-1 chain (453 aa).

Positions 12, 71, 140, 144, 145, 146, 206, and 228 each coordinate GTP. Mg(2+) is bound at residue glutamate 71. The interval 431–453 is disordered; that stretch reads TADGVEGYEEEGYENDHPEDDEE. Over residues 436 to 453 the composition is skewed to acidic residues; that stretch reads EGYEEEGYENDHPEDDEE.

The protein belongs to the tubulin family. In terms of assembly, dimer of alpha and beta chains. A typical microtubule is a hollow water-filled tube with an outer diameter of 25 nm and an inner diameter of 15 nM. Alpha-beta heterodimers associate head-to-tail to form protofilaments running lengthwise along the microtubule wall with the beta-tubulin subunit facing the microtubule plus end conferring a structural polarity. Microtubules usually have 13 protofilaments but different protofilament numbers can be found in some organisms and specialized cells. Requires Mg(2+) as cofactor.

The protein resides in the cytoplasm. It localises to the cytoskeleton. Its function is as follows. Tubulin is the major constituent of microtubules, a cylinder consisting of laterally associated linear protofilaments composed of alpha- and beta-tubulin heterodimers. Microtubules grow by the addition of GTP-tubulin dimers to the microtubule end, where a stabilizing cap forms. Below the cap, tubulin dimers are in GDP-bound state, owing to GTPase activity of alpha-tubulin. The polypeptide is Tubulin beta-1 chain (TUBB) (Chondrus crispus (Carrageen Irish moss)).